The primary structure comprises 142 residues: Large ribosomal subunit protein uL13 (142 aa).

This sequence belongs to the universal ribosomal protein uL13 family. Part of the 50S ribosomal subunit.

In terms of biological role, this protein is one of the early assembly proteins of the 50S ribosomal subunit, although it is not seen to bind rRNA by itself. It is important during the early stages of 50S assembly. This Xylella fastidiosa (strain M23) protein is Large ribosomal subunit protein uL13.